Consider the following 238-residue polypeptide: Type III pantothenate kinase (238 aa).

7-14 (DAGNSGLK) contacts ATP. Residues Y88 and 95–98 (GVDR) contribute to the substrate site. The Proton acceptor role is filled by D97. D117 serves as a coordination point for K(+). T120 contributes to the ATP binding site. Position 172 (T172) interacts with substrate.

The protein belongs to the type III pantothenate kinase family. In terms of assembly, homodimer. NH4(+) serves as cofactor. K(+) is required as a cofactor.

Its subcellular location is the cytoplasm. The enzyme catalyses (R)-pantothenate + ATP = (R)-4'-phosphopantothenate + ADP + H(+). It participates in cofactor biosynthesis; coenzyme A biosynthesis; CoA from (R)-pantothenate: step 1/5. In terms of biological role, catalyzes the phosphorylation of pantothenate (Pan), the first step in CoA biosynthesis. The polypeptide is Type III pantothenate kinase (Hahella chejuensis (strain KCTC 2396)).